We begin with the raw amino-acid sequence, 484 residues long: Putative transporter B0252.3 (484 aa).

Helical transmembrane passes span 43-63 (ILTCILVCGLAWSPLAFTGLC), 95-115 (STTTFYMVGNMIGGMFIPPLA), 121-141 (LPVFVATVLLMAVGGMISAFS), 144-164 (IMMFCIMRMIHGIFYTAAGLA), 183-203 (VYFGVMWVVGACFLGLLAYIL), 208-228 (YLMFCISVPNIFVALLIYMTV), 286-306 (MFIVYVLVMTYIWIVDTFIYF), 321-341 (LNFVLMSLVEAPAYIFSPIFM), 348-368 (VLISGTHIIAGLSFLGIVLSS), 373-393 (IHFWLLGKFAISCSFMSIYMF), and 433-453 (LAPAITLSLIAVSGGLLTLIL).

It belongs to the major facilitator superfamily. Sugar transporter (TC 2.A.1.1) family.

The protein resides in the membrane. The polypeptide is Putative transporter B0252.3 (Caenorhabditis elegans).